Reading from the N-terminus, the 504-residue chain is PE-PGRS family protein PE_PGRS62 (504 aa).

The PE domain maps to 4–94 (VVTVPEAVAA…AAYLNTESAN (91 aa)).

It belongs to the mycobacterial PE family. PGRS subfamily. In terms of assembly, interacts with host Toll-like receptor 2 (TLR2).

Its subcellular location is the secreted. The protein resides in the cell wall. Its function is as follows. Supports mycobacterial virulence via inhibition of phagosome maturation and host inducible nitric oxide synthase (iNOS) expression. May promote the survival within macrophages by disturbing the cytokines profiles and blocking the endoplasmic reticulum (ER) stress-mediated apoptosis. May also affect bacterial cell wall composition. Expression in Mycobacterium smegmatis, a nonpathogenic species naturally deficient in PE_PGRS genes, results in enhanced resistance to various in vitro stresses. It also leads to phagosome maturation arrest and increased survival in macrophages. The protein is PE-PGRS family protein PE_PGRS62 of Mycobacterium tuberculosis (strain ATCC 25618 / H37Rv).